The chain runs to 440 residues: Glutamate-1-semialdehyde 2,1-aminomutase (440 aa).

Position 271 is an N6-(pyridoxal phosphate)lysine (Lys271).

This sequence belongs to the class-III pyridoxal-phosphate-dependent aminotransferase family. HemL subfamily. As to quaternary structure, homodimer. Pyridoxal 5'-phosphate serves as cofactor.

The protein localises to the cytoplasm. It carries out the reaction (S)-4-amino-5-oxopentanoate = 5-aminolevulinate. It participates in porphyrin-containing compound metabolism; protoporphyrin-IX biosynthesis; 5-aminolevulinate from L-glutamyl-tRNA(Glu): step 2/2. This chain is Glutamate-1-semialdehyde 2,1-aminomutase, found in Chlamydia pneumoniae (Chlamydophila pneumoniae).